Consider the following 343-residue polypeptide: Cilia- and flagella-associated protein 36 (343 aa).

Ser-85 and Ser-147 each carry phosphoserine. A coiled-coil region spans residues 147 to 181 (SDLEQEEMKILREVLRKSKEEYDQEEERKRKKQSS). Residues 165-191 (KEEYDQEEERKRKKQSSEGKMEEPPIY) form a disordered region. Residue Ser-201 is modified to Phosphoserine. The disordered stretch occupies residues 286 to 323 (SMRKDMRAKQIQNTEQKGKPTREAEEMTEKPEMTAEEK). Over residues 301 to 323 (QKGKPTREAEEMTEKPEMTAEEK) the composition is skewed to basic and acidic residues.

The protein belongs to the CFAP36 family. In terms of assembly, interacts with ARL3. Widely expressed (at protein level).

Its subcellular location is the nucleus. It is found in the cytoplasm. The protein localises to the cell projection. The protein resides in the cilium. It localises to the flagellum. In terms of biological role, may act as an effector for ARL3. In Rattus norvegicus (Rat), this protein is Cilia- and flagella-associated protein 36.